The chain runs to 474 residues: Bifunctional protein HldE (474 aa).

The interval 1-318 (MKLSMPRFDQ…RAVQREQGSE (318 aa)) is ribokinase. Position 194 to 197 (194 to 197 (NLSE)) interacts with ATP. The active site involves Asp-263. The cytidylyltransferase stretch occupies residues 343–474 (FTNGCFDILH…AIVEKIRQKG (132 aa)).

This sequence in the N-terminal section; belongs to the carbohydrate kinase PfkB family. The protein in the C-terminal section; belongs to the cytidylyltransferase family. As to quaternary structure, homodimer.

It carries out the reaction D-glycero-beta-D-manno-heptose 7-phosphate + ATP = D-glycero-beta-D-manno-heptose 1,7-bisphosphate + ADP + H(+). The catalysed reaction is D-glycero-beta-D-manno-heptose 1-phosphate + ATP + H(+) = ADP-D-glycero-beta-D-manno-heptose + diphosphate. Its pathway is nucleotide-sugar biosynthesis; ADP-L-glycero-beta-D-manno-heptose biosynthesis; ADP-L-glycero-beta-D-manno-heptose from D-glycero-beta-D-manno-heptose 7-phosphate: step 1/4. It functions in the pathway nucleotide-sugar biosynthesis; ADP-L-glycero-beta-D-manno-heptose biosynthesis; ADP-L-glycero-beta-D-manno-heptose from D-glycero-beta-D-manno-heptose 7-phosphate: step 3/4. It participates in bacterial outer membrane biogenesis; LPS core biosynthesis. Its function is as follows. Catalyzes the phosphorylation of D-glycero-D-manno-heptose 7-phosphate at the C-1 position to selectively form D-glycero-beta-D-manno-heptose-1,7-bisphosphate. Functionally, catalyzes the ADP transfer from ATP to D-glycero-beta-D-manno-heptose 1-phosphate, yielding ADP-D-glycero-beta-D-manno-heptose. The sequence is that of Bifunctional protein HldE from Pseudomonas aeruginosa (strain ATCC 15692 / DSM 22644 / CIP 104116 / JCM 14847 / LMG 12228 / 1C / PRS 101 / PAO1).